The chain runs to 272 residues: uncharacterized protein (272 aa).

The first 20 residues, 1–20, serve as a signal peptide directing secretion; it reads MKLRKIFLLPLISLSTLSVA. Residue cysteine 21 is the site of N-palmitoyl cysteine attachment. Cysteine 21 is lipidated: S-diacylglycerol cysteine.

Belongs to the MG439/MG440 family.

It is found in the cell membrane. This is an uncharacterized protein from Mycoplasma genitalium (strain ATCC 33530 / DSM 19775 / NCTC 10195 / G37) (Mycoplasmoides genitalium).